The primary structure comprises 403 residues: Na(+)-translocating NADH-quinone reductase subunit B (403 aa).

9 consecutive transmembrane segments (helical) span residues 56-76 (MMIIVWLCTFPAMFFGMYNVG), 121-141 (AYFLPVYLTTFIVGGFWEVLF), 164-184 (LPPSVPLWQVALGISFGVVLG), 225-245 (GFAGATSLSLAAAGGVDNILG), 260-280 (GSMGETSTLAIFIGGAVLLLT), 287-307 (IVAGVMLGMIAMSYLFNAIGS), 312-332 (MFAMPWYWHLVTGGFAFGMIF), 348-368 (WLFGALIGVMVMLIRVVNPAF), and 371-391 (GMMLAILFANLFAPLIDHFVV). T230 bears the FMN phosphoryl threonine mark.

Belongs to the NqrB/RnfD family. Composed of six subunits; NqrA, NqrB, NqrC, NqrD, NqrE and NqrF. Requires FMN as cofactor.

It is found in the cell inner membrane. It catalyses the reaction a ubiquinone + n Na(+)(in) + NADH + H(+) = a ubiquinol + n Na(+)(out) + NAD(+). NQR complex catalyzes the reduction of ubiquinone-1 to ubiquinol by two successive reactions, coupled with the transport of Na(+) ions from the cytoplasm to the periplasm. NqrA to NqrE are probably involved in the second step, the conversion of ubisemiquinone to ubiquinol. The polypeptide is Na(+)-translocating NADH-quinone reductase subunit B (Pseudomonas paraeruginosa (strain DSM 24068 / PA7) (Pseudomonas aeruginosa (strain PA7))).